Reading from the N-terminus, the 415-residue chain is Gamma-glutamyl phosphate reductase (415 aa).

Belongs to the gamma-glutamyl phosphate reductase family.

The protein localises to the cytoplasm. It catalyses the reaction L-glutamate 5-semialdehyde + phosphate + NADP(+) = L-glutamyl 5-phosphate + NADPH + H(+). The protein operates within amino-acid biosynthesis; L-proline biosynthesis; L-glutamate 5-semialdehyde from L-glutamate: step 2/2. Catalyzes the NADPH-dependent reduction of L-glutamate 5-phosphate into L-glutamate 5-semialdehyde and phosphate. The product spontaneously undergoes cyclization to form 1-pyrroline-5-carboxylate. The polypeptide is Gamma-glutamyl phosphate reductase (Xylella fastidiosa (strain 9a5c)).